We begin with the raw amino-acid sequence, 482 residues long: tRNA sulfurtransferase (482 aa).

A THUMP domain is found at L61–R165. ATP-binding positions include L183–I184, K265, G287, and Q296. C344 and C456 are oxidised to a cystine. The Rhodanese domain maps to F404–P482. C456 functions as the Cysteine persulfide intermediate in the catalytic mechanism.

The protein belongs to the ThiI family. In terms of assembly, interacts with IscS.

It localises to the cytoplasm. The catalysed reaction is [ThiI sulfur-carrier protein]-S-sulfanyl-L-cysteine + a uridine in tRNA + 2 reduced [2Fe-2S]-[ferredoxin] + ATP + H(+) = [ThiI sulfur-carrier protein]-L-cysteine + a 4-thiouridine in tRNA + 2 oxidized [2Fe-2S]-[ferredoxin] + AMP + diphosphate. The enzyme catalyses [ThiS sulfur-carrier protein]-C-terminal Gly-Gly-AMP + S-sulfanyl-L-cysteinyl-[cysteine desulfurase] + AH2 = [ThiS sulfur-carrier protein]-C-terminal-Gly-aminoethanethioate + L-cysteinyl-[cysteine desulfurase] + A + AMP + 2 H(+). It participates in cofactor biosynthesis; thiamine diphosphate biosynthesis. Functionally, catalyzes the ATP-dependent transfer of a sulfur to tRNA to produce 4-thiouridine in position 8 of tRNAs, which functions as a near-UV photosensor. Also catalyzes the transfer of sulfur to the sulfur carrier protein ThiS, forming ThiS-thiocarboxylate. This is a step in the synthesis of thiazole, in the thiamine biosynthesis pathway. The sulfur is donated as persulfide by IscS. In Escherichia coli O157:H7, this protein is tRNA sulfurtransferase.